The chain runs to 252 residues: 5'-nucleotidase SurE (252 aa).

The a divalent metal cation site is built by Asp-8, Asp-9, Ser-39, and Asn-91.

It belongs to the SurE nucleotidase family. It depends on a divalent metal cation as a cofactor.

The protein resides in the cytoplasm. The enzyme catalyses a ribonucleoside 5'-phosphate + H2O = a ribonucleoside + phosphate. Its function is as follows. Nucleotidase that shows phosphatase activity on nucleoside 5'-monophosphates. This chain is 5'-nucleotidase SurE, found in Legionella pneumophila (strain Paris).